The sequence spans 508 residues: Photosystem II CP47 reaction center protein (508 aa).

6 helical membrane-spanning segments follow: residues 21-36, 101-115, 140-156, 203-218, 237-252, and 457-472; these read AVHIMHTALVAGWAGS, IVFSGLCFLAAIWHW, GIHLFLSGVACFGFGTF, IAAGTLGILAGLFHLS, VLSSSIAAVFFAAFVV, and SFALLFFFGHIWHGAR.

It belongs to the PsbB/PsbC family. PsbB subfamily. In terms of assembly, PSII is composed of 1 copy each of membrane proteins PsbA, PsbB, PsbC, PsbD, PsbE, PsbF, PsbH, PsbI, PsbJ, PsbK, PsbL, PsbM, PsbT, PsbX, PsbY, PsbZ, Psb30/Ycf12, at least 3 peripheral proteins of the oxygen-evolving complex and a large number of cofactors. It forms dimeric complexes. It depends on Binds multiple chlorophylls. PSII binds additional chlorophylls, carotenoids and specific lipids. as a cofactor.

It localises to the plastid. Its subcellular location is the chloroplast thylakoid membrane. One of the components of the core complex of photosystem II (PSII). It binds chlorophyll and helps catalyze the primary light-induced photochemical processes of PSII. PSII is a light-driven water:plastoquinone oxidoreductase, using light energy to abstract electrons from H(2)O, generating O(2) and a proton gradient subsequently used for ATP formation. The polypeptide is Photosystem II CP47 reaction center protein (Citrus sinensis (Sweet orange)).